The primary structure comprises 251 residues: Large ribosomal subunit protein uL4 (251 aa).

Belongs to the universal ribosomal protein uL4 family. As to quaternary structure, part of the 50S ribosomal subunit.

One of the primary rRNA binding proteins, this protein initially binds near the 5'-end of the 23S rRNA. It is important during the early stages of 50S assembly. It makes multiple contacts with different domains of the 23S rRNA in the assembled 50S subunit and ribosome. In terms of biological role, forms part of the polypeptide exit tunnel. This chain is Large ribosomal subunit protein uL4, found in Methanothrix thermoacetophila (strain DSM 6194 / JCM 14653 / NBRC 101360 / PT) (Methanosaeta thermophila).